A 349-amino-acid polypeptide reads, in one-letter code: Phosphoribosylformylglycinamidine cyclo-ligase (349 aa).

Belongs to the AIR synthase family.

It is found in the cytoplasm. It carries out the reaction 2-formamido-N(1)-(5-O-phospho-beta-D-ribosyl)acetamidine + ATP = 5-amino-1-(5-phospho-beta-D-ribosyl)imidazole + ADP + phosphate + H(+). The protein operates within purine metabolism; IMP biosynthesis via de novo pathway; 5-amino-1-(5-phospho-D-ribosyl)imidazole from N(2)-formyl-N(1)-(5-phospho-D-ribosyl)glycinamide: step 2/2. This is Phosphoribosylformylglycinamidine cyclo-ligase from Methanococcus maripaludis (strain C5 / ATCC BAA-1333).